Here is a 101-residue protein sequence, read N- to C-terminus: Urease subunit beta (101 aa).

Belongs to the urease beta subunit family. As to quaternary structure, heterotrimer of UreA (gamma), UreB (beta) and UreC (alpha) subunits. Three heterotrimers associate to form the active enzyme.

It is found in the cytoplasm. It carries out the reaction urea + 2 H2O + H(+) = hydrogencarbonate + 2 NH4(+). Its pathway is nitrogen metabolism; urea degradation; CO(2) and NH(3) from urea (urease route): step 1/1. The polypeptide is Urease subunit beta (Hahella chejuensis (strain KCTC 2396)).